Consider the following 562-residue polypeptide: Alpha-1D adrenergic receptor (562 aa).

Residues 1 to 90 (MTFRDILSVT…VGGLVVSAQG (90 aa)) lie on the Extracellular side of the membrane. Disordered stretches follow at residues 13–44 (GPRASSSTGGSGAGGGAGTVGPEGPAVGGVPG) and 50–69 (AVVGTGSGEDNQSSTAEAGA). Residues 21–44 (GGSGAGGGAGTVGPEGPAVGGVPG) are compositionally biased toward gly residues. Asparagine 60 and asparagine 76 each carry an N-linked (GlcNAc...) asparagine glycan. A helical transmembrane segment spans residues 91–115 (VGVGVFLAAFILTAVAGNLLVILSV). The Cytoplasmic segment spans residues 116-127 (ACNRHLQTVTNY). The helical transmembrane segment at 128 to 153 (FIVNLAVADLLLSAAVLPFSATMEVL) threads the bilayer. Topologically, residues 154–163 (GFWPFGRTFC) are extracellular. The chain crosses the membrane as a helical span at residues 164–186 (DVWAAVDVLCCTASILSLCTISV). Residues 187-207 (DRYVGVRHSLKYPAIMTERKA) lie on the Cytoplasmic side of the membrane. Residues 208–232 (AAILALLWAVALVVSVGPLLGWKEP) form a helical membrane-spanning segment. Over 233-245 (VPPDERFCGITEE) the chain is Extracellular. The helical transmembrane segment at 246–269 (VGYAIFSSVCSFYLPMAVIVVMYC) threads the bilayer. Residues 270–342 (RVYVVARSTT…KFSREKKAAK (73 aa)) are Cytoplasmic-facing. The chain crosses the membrane as a helical span at residues 343 to 367 (TLAIVVGVFVLCWFPFFFVLPLGSL). The Extracellular portion of the chain corresponds to 368–374 (FPQLKPS). The helical transmembrane segment at 375-399 (EGVFKVIFWLGYFNSCVNPLIYPCS) threads the bilayer. At 400-562 (SREFKRAFLR…DLSNLRETDI (163 aa)) the chain is on the cytoplasmic side. The S-palmitoyl cysteine moiety is linked to residue cysteine 413. The interval 444–472 (QPAHRTPRGSPSPHCTPRPGLRRHAGGAG) is disordered.

The protein belongs to the G-protein coupled receptor 1 family. Adrenergic receptor subfamily. ADRA1D sub-subfamily. Interacts with FLNA (via filamin repeat 21); increases PKA-mediated phosphorylation of FLNA. In terms of processing, palmitoylated. Palmitoylation by ZDHHC21 may increase the expression of the receptor and regulate downstream signaling.

The protein localises to the cell membrane. In terms of biological role, this alpha-adrenergic receptor mediates its effect through the influx of extracellular calcium. This is Alpha-1D adrenergic receptor (Adra1d) from Mus musculus (Mouse).